The primary structure comprises 267 residues: Tryptophan synthase alpha chain (267 aa).

Residues glutamate 47 and aspartate 58 each act as proton acceptor in the active site.

This sequence belongs to the TrpA family. Tetramer of two alpha and two beta chains.

The catalysed reaction is (1S,2R)-1-C-(indol-3-yl)glycerol 3-phosphate + L-serine = D-glyceraldehyde 3-phosphate + L-tryptophan + H2O. Its pathway is amino-acid biosynthesis; L-tryptophan biosynthesis; L-tryptophan from chorismate: step 5/5. Functionally, the alpha subunit is responsible for the aldol cleavage of indoleglycerol phosphate to indole and glyceraldehyde 3-phosphate. The sequence is that of Tryptophan synthase alpha chain from Chlorobium phaeovibrioides (strain DSM 265 / 1930) (Prosthecochloris vibrioformis (strain DSM 265)).